Here is a 287-residue protein sequence, read N- to C-terminus: Melatonin receptor type 1B-A (287 aa).

At 1-28 the chain is on the extracellular side; that stretch reads MPENVSLIRNRTEVGQGRAWGSGAGARP. 2 N-linked (GlcNAc...) asparagine glycosylation sites follow: Asn4 and Asn10. A helical transmembrane segment spans residues 29-49; the sequence is AWVVMVLAGVLIFTSVVDVLG. The Cytoplasmic portion of the chain corresponds to 50-69; the sequence is NVLVIISVLRNRKLRNAGNA. The chain crosses the membrane as a helical span at residues 70 to 90; that stretch reads FVVSLAFADLLVVCYPYPLVL. Topologically, residues 91 to 107 are extracellular; that stretch reads HAMLHAGWLPGEMECKV. Cys105 and Cys182 form a disulfide bridge. A helical membrane pass occupies residues 108–128; that stretch reads SGFLMGASVIGSIFNITAIAI. Residues 129-149 lie on the Cytoplasmic side of the membrane; sequence NRYCFICQANTYEKIYGRAGT. Residues 150-170 traverse the membrane as a helical segment; it reads LVLLTLVWVLTAIAILPNLSL. The Extracellular segment spans residues 171-192; that stretch reads GSLTYDPRVYSCTFSQTTSAGY. A helical transmembrane segment spans residues 193–213; sequence TIAVVTVHFLLPIAVVTFCYL. At 214–245 the chain is on the cytoplasmic side; sequence RIWVLVLRVRRRVTTDVRPRLRPSELRHFLTM. The chain crosses the membrane as a helical span at residues 246-266; sequence FVVFVLFAVCWAPLNLIGLAV. Over 267 to 275 the chain is Extracellular; the sequence is AVDPPRVGP. A helical membrane pass occupies residues 276-287; the sequence is LVPDWLFVMSYF.

Belongs to the G-protein coupled receptor 1 family.

Its subcellular location is the cell membrane. High affinity receptor for melatonin. The activity of this receptor is mediated by pertussis toxin sensitive G proteins that inhibits adenylate cyclase activity. This is Melatonin receptor type 1B-A (mtnr1ba) from Danio rerio (Zebrafish).